The following is an 87-amino-acid chain: Putative regulatory protein BH2513 (87 aa).

The protein belongs to the RemA family.

The sequence is that of Putative regulatory protein BH2513 from Halalkalibacterium halodurans (strain ATCC BAA-125 / DSM 18197 / FERM 7344 / JCM 9153 / C-125) (Bacillus halodurans).